Consider the following 351-residue polypeptide: Dihydroorotate dehydrogenase (quinone) (351 aa).

Residues 67–71 (AGFDK) and Thr-91 each bind FMN. Lys-71 is a binding site for substrate. 116–120 (NAMGF) provides a ligand contact to substrate. Asn-145 and Asn-178 together coordinate FMN. Asn-178 provides a ligand contact to substrate. Residue Ser-181 is the Nucleophile of the active site. Asn-183 provides a ligand contact to substrate. 2 residues coordinate FMN: Lys-214 and Thr-242. 243-244 (NT) lines the substrate pocket. FMN is bound by residues Gly-262, Gly-291, and 312-313 (YS).

The protein belongs to the dihydroorotate dehydrogenase family. Type 2 subfamily. In terms of assembly, monomer. It depends on FMN as a cofactor.

It localises to the cell membrane. The enzyme catalyses (S)-dihydroorotate + a quinone = orotate + a quinol. It functions in the pathway pyrimidine metabolism; UMP biosynthesis via de novo pathway; orotate from (S)-dihydroorotate (quinone route): step 1/1. Catalyzes the conversion of dihydroorotate to orotate with quinone as electron acceptor. This Helicobacter pylori (strain HPAG1) protein is Dihydroorotate dehydrogenase (quinone).